We begin with the raw amino-acid sequence, 209 residues long: Ribosomal RNA large subunit methyltransferase E (209 aa).

Positions 63, 65, 83, 99, and 124 each coordinate S-adenosyl-L-methionine. Lysine 164 serves as the catalytic Proton acceptor.

This sequence belongs to the class I-like SAM-binding methyltransferase superfamily. RNA methyltransferase RlmE family.

Its subcellular location is the cytoplasm. It catalyses the reaction uridine(2552) in 23S rRNA + S-adenosyl-L-methionine = 2'-O-methyluridine(2552) in 23S rRNA + S-adenosyl-L-homocysteine + H(+). Functionally, specifically methylates the uridine in position 2552 of 23S rRNA at the 2'-O position of the ribose in the fully assembled 50S ribosomal subunit. The sequence is that of Ribosomal RNA large subunit methyltransferase E from Shewanella sp. (strain ANA-3).